Reading from the N-terminus, the 68-residue chain is Large ribosomal subunit protein uL29 (68 aa).

The protein belongs to the universal ribosomal protein uL29 family.

This Rhodopseudomonas palustris (strain BisB18) protein is Large ribosomal subunit protein uL29.